A 415-amino-acid chain; its full sequence is Gamma-glutamyl phosphate reductase (415 aa).

The protein belongs to the gamma-glutamyl phosphate reductase family.

It localises to the cytoplasm. The enzyme catalyses L-glutamate 5-semialdehyde + phosphate + NADP(+) = L-glutamyl 5-phosphate + NADPH + H(+). Its pathway is amino-acid biosynthesis; L-proline biosynthesis; L-glutamate 5-semialdehyde from L-glutamate: step 2/2. Functionally, catalyzes the NADPH-dependent reduction of L-glutamate 5-phosphate into L-glutamate 5-semialdehyde and phosphate. The product spontaneously undergoes cyclization to form 1-pyrroline-5-carboxylate. This Carboxydothermus hydrogenoformans (strain ATCC BAA-161 / DSM 6008 / Z-2901) protein is Gamma-glutamyl phosphate reductase.